Here is a 471-residue protein sequence, read N- to C-terminus: Tryptophanase (471 aa).

Lysine 270 bears the N6-(pyridoxal phosphate)lysine mark.

This sequence belongs to the beta-eliminating lyase family. As to quaternary structure, homotetramer. The cofactor is pyridoxal 5'-phosphate.

The catalysed reaction is L-tryptophan + H2O = indole + pyruvate + NH4(+). Its pathway is amino-acid degradation; L-tryptophan degradation via pyruvate pathway; indole and pyruvate from L-tryptophan: step 1/1. The sequence is that of Tryptophanase from Histophilus somni (strain 129Pt) (Haemophilus somnus).